A 441-amino-acid polypeptide reads, in one-letter code: Enolase (441 aa).

Q164 serves as a coordination point for (2R)-2-phosphoglycerate. E206 (proton donor) is an active-site residue. 3 residues coordinate Mg(2+): D243, E289, and D316. 4 residues coordinate (2R)-2-phosphoglycerate: K341, R370, S371, and K392. Residue K341 is the Proton acceptor of the active site.

This sequence belongs to the enolase family. It depends on Mg(2+) as a cofactor.

It is found in the cytoplasm. The protein localises to the secreted. The protein resides in the cell surface. It catalyses the reaction (2R)-2-phosphoglycerate = phosphoenolpyruvate + H2O. It functions in the pathway carbohydrate degradation; glycolysis; pyruvate from D-glyceraldehyde 3-phosphate: step 4/5. Catalyzes the reversible conversion of 2-phosphoglycerate (2-PG) into phosphoenolpyruvate (PEP). It is essential for the degradation of carbohydrates via glycolysis. The sequence is that of Enolase from Leuconostoc citreum (strain KM20).